Reading from the N-terminus, the 378-residue chain is tRNA (guanine(26)-N(2))-dimethyltransferase (378 aa).

A Trm1 methyltransferase domain is found at 4 to 374 (KEVTEGKVRI…KGYEEIIRCV (371 aa)). S-adenosyl-L-methionine contacts are provided by Arg44, Arg69, Asp87, Asp114, and Ala115. Zn(2+) is bound by residues Cys246, Cys249, Cys263, and Cys266.

Belongs to the class I-like SAM-binding methyltransferase superfamily. Trm1 family.

It catalyses the reaction guanosine(26) in tRNA + 2 S-adenosyl-L-methionine = N(2)-dimethylguanosine(26) in tRNA + 2 S-adenosyl-L-homocysteine + 2 H(+). Functionally, dimethylates a single guanine residue at position 26 of a number of tRNAs using S-adenosyl-L-methionine as donor of the methyl groups. This chain is tRNA (guanine(26)-N(2))-dimethyltransferase, found in Saccharolobus islandicus (strain L.S.2.15 / Lassen #1) (Sulfolobus islandicus).